A 442-amino-acid chain; its full sequence is Mimosinase, chloroplastic (442 aa).

The N-terminal 35 residues, 1 to 35 (MALPSAFLNPFVPSPVTANPRTKFARVGKGFNVSC), are a transit peptide targeting the chloroplast. Positions 103, 105, 133, 134, 252, and 254 each coordinate pyridoxal 5'-phosphate. Lysine 255 is modified (N6-(pyridoxal phosphate)lysine).

It belongs to the trans-sulfuration enzymes family. As to quaternary structure, forms homodimers. May form homotetramers from two homodimers. The cofactor is pyridoxal 5'-phosphate.

It localises to the plastid. The protein localises to the chloroplast. It carries out the reaction L-mimosine + H2O = 3-hydroxy-4H-pyrid-4-one + pyruvate + NH4(+). The catalysed reaction is L,L-cystathionine + H2O = L-homocysteine + pyruvate + NH4(+). The enzyme catalyses an S-substituted L-cysteine + H2O = a thiol + pyruvate + NH4(+). Functionally, catalyzes the degradation of mimosine, which is a toxic secondary metabolite found in all Mimosa and Leucaena species. Catalyzes the degradation of cystathionine, but seems to have lower preference toward cystathionine over mimosine. The chain is Mimosinase, chloroplastic from Mimosa pudica (Sensitive plant).